Reading from the N-terminus, the 257-residue chain is 5-oxoprolinase subunit A (257 aa).

The protein belongs to the LamB/PxpA family. As to quaternary structure, forms a complex composed of PxpA, PxpB and PxpC.

It carries out the reaction 5-oxo-L-proline + ATP + 2 H2O = L-glutamate + ADP + phosphate + H(+). Its function is as follows. Catalyzes the cleavage of 5-oxoproline to form L-glutamate coupled to the hydrolysis of ATP to ADP and inorganic phosphate. This chain is 5-oxoprolinase subunit A, found in Pectobacterium atrosepticum (strain SCRI 1043 / ATCC BAA-672) (Erwinia carotovora subsp. atroseptica).